The following is a 94-amino-acid chain: ESAT-6-like protein EsxO (94 aa).

The protein belongs to the WXG100 family. ESAT-6 subfamily. In terms of assembly, forms a complex with EsxP.

The protein resides in the secreted. This chain is ESAT-6-like protein EsxO, found in Mycobacterium tuberculosis (strain CDC 1551 / Oshkosh).